A 446-amino-acid chain; its full sequence is Citrate/sodium symporter (446 aa).

A run of 5 helical transmembrane segments spans residues 23–43, 46–66, 79–99, 110–130, and 148–168; these read IFGM…LSHF, AIPT…AIFG, IGGA…AGIF, VMDK…GAIL, and ILAG…CFGI. Na(+) is bound by residues I181 and G183. Residues N186 and G187 each coordinate citrate. Transmembrane regions (helical) follow at residues 213 to 233, 267 to 287, 289 to 309, 335 to 355, and 364 to 384; these read IAIL…LDMI, ETAV…VVAK, ILPS…LIVA, QLLW…QEII, and VIAA…GWLI. Positions 399 and 401 each coordinate Na(+). Positions 402, 404, 405, and 428 each coordinate citrate. The chain crosses the membrane as a helical span at residues 425 to 445; that stretch reads ISSRLGGGIVLVIASIVFSMM.

This sequence belongs to the 2-hydroxycarboxylate transporter (2-HCT) (TC 2.A.24) family. As to quaternary structure, homodimer.

Its subcellular location is the cell inner membrane. The enzyme catalyses citrate(out) + 2 Na(+)(out) = citrate(in) + 2 Na(+)(in). Functionally, secondary active transporter that catalyzes the uptake of citrate across the membrane with the concomitant uptake of sodium. Is specific for citrate. The chain is Citrate/sodium symporter from Salmonella dublin.